We begin with the raw amino-acid sequence, 303 residues long: Diaminopimelate epimerase (303 aa).

Residues N15, Q47, and N67 each contribute to the substrate site. C76 acts as the Proton donor in catalysis. Substrate is bound by residues 77 to 78 (GN), N163, N197, and 215 to 216 (ER). The active-site Proton acceptor is C224. Residue 225–226 (GS) participates in substrate binding.

It belongs to the diaminopimelate epimerase family. As to quaternary structure, homodimer.

Its subcellular location is the cytoplasm. The catalysed reaction is (2S,6S)-2,6-diaminopimelate = meso-2,6-diaminopimelate. The protein operates within amino-acid biosynthesis; L-lysine biosynthesis via DAP pathway; DL-2,6-diaminopimelate from LL-2,6-diaminopimelate: step 1/1. In terms of biological role, catalyzes the stereoinversion of LL-2,6-diaminopimelate (L,L-DAP) to meso-diaminopimelate (meso-DAP), a precursor of L-lysine and an essential component of the bacterial peptidoglycan. In Allorhizobium ampelinum (strain ATCC BAA-846 / DSM 112012 / S4) (Agrobacterium vitis (strain S4)), this protein is Diaminopimelate epimerase.